The following is a 164-amino-acid chain: Large ribosomal subunit protein eL21x/eL21w (164 aa).

It belongs to the eukaryotic ribosomal protein eL21 family.

The sequence is that of Large ribosomal subunit protein eL21x/eL21w (RPL21E) from Arabidopsis thaliana (Mouse-ear cress).